The following is a 63-amino-acid chain: uncharacterized protein (63 aa).

Positions 35–63 (PKPDSLISEHPTAQEAMDAKKRYEDPDKE) are disordered. A compositionally biased stretch (basic and acidic residues) spans 51–63 (MDAKKRYEDPDKE).

This is an uncharacterized protein from Escherichia coli O157:H7.